Consider the following 208-residue polypeptide: MAEAEGSSPLLLQPPPPPPRMAEVETPTGAETDMKQYHGSGGVVMDVERSRFPYCVVWTPIPVLTWFFPIIGHMGICTSAGVIRDFAGPYFVSEDNMAFGKPAKFWKLDPGQVYASGPNAWDTAVHDASEEYKHRMHNLCCDNCHSHVALALNLMRYNNSTNWNMVTLCCFCLIYGKYVSVGAFVKTWLPFVLLLGIILTVSLVFNLR.

The tract at residues 1–34 (MAEAEGSSPLLLQPPPPPPRMAEVETPTGAETDM) is disordered. Topologically, residues 1–55 (MAEAEGSSPLLLQPPPPPPRMAEVETPTGAETDMKQYHGSGGVVMDVERSRFPYC) are extracellular. A helical membrane pass occupies residues 56-76 (VVWTPIPVLTWFFPIIGHMGI). The Cytoplasmic segment spans residues 77–164 (CTSAGVIRDF…MRYNNSTNWN (88 aa)). Residues 165-185 (MVTLCCFCLIYGKYVSVGAFV) form a helical membrane-spanning segment. A topological domain (extracellular) is located at residue lysine 186. Residues 187–207 (TWLPFVLLLGIILTVSLVFNL) form a helical membrane-spanning segment. Position 208 (arginine 208) is a topological domain, cytoplasmic.

It is found in the membrane. The protein resides in the cell projection. Its subcellular location is the dendrite. This Mus musculus (Mouse) protein is Transmembrane protein 222 (Tmem222).